We begin with the raw amino-acid sequence, 1175 residues long: DNA-directed RNA polymerase subunit beta (1175 aa).

The tract at residues 12–33 (QSKTDRPQSSSNGSSSLNGSVP) is disordered. Residues 20 to 31 (SSSNGSSSLNGS) are compositionally biased toward low complexity.

The protein belongs to the RNA polymerase beta chain family. As to quaternary structure, the RNAP catalytic core consists of 2 alpha, 1 beta, 1 beta' and 1 omega subunit. When a sigma factor is associated with the core the holoenzyme is formed, which can initiate transcription.

The catalysed reaction is RNA(n) + a ribonucleoside 5'-triphosphate = RNA(n+1) + diphosphate. Its function is as follows. DNA-dependent RNA polymerase catalyzes the transcription of DNA into RNA using the four ribonucleoside triphosphates as substrates. The chain is DNA-directed RNA polymerase subunit beta from Mycobacterium avium (strain 104).